Consider the following 187-residue polypeptide: Large ribosomal subunit protein bL17 (187 aa).

Belongs to the bacterial ribosomal protein bL17 family. As to quaternary structure, part of the 50S ribosomal subunit. Contacts protein L32.

The sequence is that of Large ribosomal subunit protein bL17 from Rhodococcus opacus (strain B4).